We begin with the raw amino-acid sequence, 457 residues long: Protein translocase subunit SecY (457 aa).

Helical transmembrane passes span 17–37 (IFFTFSLLALCRIGVFIPVPG), 75–95 (IALGVVPYISASIIVQLLVVF), 120–140 (LFTLLLACVQSLLFAKFALRM), 163–183 (VFYLTTVVVMTTGTLLLMWIG), 195–215 (ISLIITLGMLASFPSVLGSIF), 230–250 (IVSLLVLCAVFVFVLMATVLI), 287–307 (VIPVIFASSLLMFPATIGQFL), 326–346 (VVYSIFYVLLIIFFTYFWTAT), 386–406 (LLGAVFLAVVAILPSILGRIL), and 412–432 (VSYFLGGTAMLIVVGVVLDTM).

The protein belongs to the SecY/SEC61-alpha family. As to quaternary structure, component of the Sec protein translocase complex. Heterotrimer consisting of SecY, SecE and SecG subunits. The heterotrimers can form oligomers, although 1 heterotrimer is thought to be able to translocate proteins. Interacts with the ribosome. Interacts with SecDF, and other proteins may be involved. Interacts with SecA.

The protein resides in the cell inner membrane. Functionally, the central subunit of the protein translocation channel SecYEG. Consists of two halves formed by TMs 1-5 and 6-10. These two domains form a lateral gate at the front which open onto the bilayer between TMs 2 and 7, and are clamped together by SecE at the back. The channel is closed by both a pore ring composed of hydrophobic SecY resides and a short helix (helix 2A) on the extracellular side of the membrane which forms a plug. The plug probably moves laterally to allow the channel to open. The ring and the pore may move independently. This is Protein translocase subunit SecY from Chlamydia muridarum (strain MoPn / Nigg).